The chain runs to 71 residues: DNA-directed RNA polymerase subunit Rpo10 (71 aa).

Residues C6, C9, C52, and C53 each contribute to the Zn(2+) site.

The protein belongs to the archaeal Rpo10/eukaryotic RPB10 RNA polymerase subunit family. Part of the RNA polymerase complex. The cofactor is Zn(2+).

It is found in the cytoplasm. The enzyme catalyses RNA(n) + a ribonucleoside 5'-triphosphate = RNA(n+1) + diphosphate. Its function is as follows. DNA-dependent RNA polymerase (RNAP) catalyzes the transcription of DNA into RNA using the four ribonucleoside triphosphates as substrates. The chain is DNA-directed RNA polymerase subunit Rpo10 from Methanocella arvoryzae (strain DSM 22066 / NBRC 105507 / MRE50).